The primary structure comprises 847 residues: MAQRNGMSPRPPPLGRGRGAGGPSGVGSSPPSSCVPMGATSTAGTGASAAPTATPGHGVHRVEPRGPPGAPPSSGNNSNFWHGPERLLLSQIPVERQALTELEYQAMGAVWRAAFLANSTGRAMRKWSQRDAGTLLPLGRPYGFYARVTPRSQMNGVGATDLRQLSPRDAWIVLVATVVHEVDPAADPTVGDKAGHPEGLCAQDGLYLALGAGFRVFVYDLANNTLILAARDADEWFRHGAGEVVRLYRCNRLGVGTPRATLLPQPALRQTLLRAEEATALGRELRRRWAGTTVALQTPGRRLQPMVLLGAWQELAQYEPFASAPHPASLLTAVRRHLNQRLCCGWLALGAVLPARWLGCAAGPATGTTSPPAASGTETEAAGGDAPCAMAGAVGSAVTIPPQPYGGAGGSAICVPNADAHAVVGADATAAAAAAAAAPTVMVGPTAMAGPAASGTVPRAMLVVVLDELGAVFGYCPLDGHVYPLAAELSHFLRAGVLGALALGRESAPAAEAARRLLPELDREQWERPRWDALHLHPRAALWAREPHGQWEFMFREQRGDPIHDPVAFRLSDARTLGLDLTTVMTERQSQLPEKYIGFYQIRKPPWLMEQPPPPSRQTKPDAATMPPPLSAQASVSYALRYDDESWRPLSTVDDHKAWLDLDESHWVLGDSRPDDIKQRRLLKATQRRGAEIDRPMPVVPEECYDQRFTTEGHQVIPLCASEPEDDDEDPTYDELPSRPPQKHKPPDKPPRLCKTGPGPPPLPPKQRHGSTDGKVSAPRQSEHHKRQTRPPRPPPPKFGDRTAAHLSQNMRDMYLDMCTSSGHRPRPPAPPRPKKCQTHAPHHVHH.

Disordered regions lie at residues 1–82 (MAQR…NFWH), 607–627 (WLME…ATMP), and 715–847 (QVIP…HVHH). The segment covering 16–25 (RGRGAGGPSG) has biased composition (gly residues). Residues 26–56 (VGSSPPSSCVPMGATSTAGTGASAAPTATPG) are compositionally biased toward low complexity. The segment covering 723–733 (EPEDDDEDPTY) has biased composition (acidic residues). A compositionally biased stretch (basic residues) spans 833-847 (RPKKCQTHAPHHVHH).

This sequence belongs to the herpesviridae US22 family. Interacts (via N-terminus) with the viral DNA polymerase accessory subunit UL44. Interacts (via C-terminus) with host EIF2AK2.

The protein localises to the virion. It is found in the host cytoplasm. It localises to the host nucleus. Its function is as follows. Acts as a transactivator along with IE2, and is required for oriLyt-dependent DNA replication in the transient transfection replication assay using native promoters. The polypeptide is Protein IRS1 (IRS1) (Human cytomegalovirus (strain Merlin) (HHV-5)).